A 110-amino-acid chain; its full sequence is Insulin (110 aa).

The N-terminal stretch at 1–24 (MALWMRLLPLLALLALWGPDPAQA) is a signal peptide. Cystine bridges form between Cys-31-Cys-96, Cys-43-Cys-109, and Cys-95-Cys-100. Residues 57 to 87 (EAEDLQVGQVELGGGPGAGSLQPLALEGSLQ) constitute a propeptide, c peptide.

The protein belongs to the insulin family. In terms of assembly, heterodimer of a B chain and an A chain linked by two disulfide bonds.

The protein localises to the secreted. In terms of biological role, insulin decreases blood glucose concentration. It increases cell permeability to monosaccharides, amino acids and fatty acids. It accelerates glycolysis, the pentose phosphate cycle, and glycogen synthesis in liver. The sequence is that of Insulin (INS) from Pongo pygmaeus (Bornean orangutan).